A 394-amino-acid polypeptide reads, in one-letter code: MSSLSRFLLRGNFSFSTHTNRRFFSAVTAAAATPSPPKPSLITLVNDERDPKFITEKFKKACQAEWFRKNIAVYERTVRRLAAAKKFEWVEEILEEQNKYPNMSKEGFVARIINLYGRVGMFENAQKVFDEMPERNCKRTALSFNALLNACVNSKKFDLVEGIFKELPGKLSIEPDVASYNTLIKGLCGKGSFTEAVALIDEIENKGLKPDHITFNILLHESYTKGKFEEGEQIWARMVEKNVKRDIRSYNARLLGLAMENKSEEMVSLFDKLKGNELKPDVFTFTAMIKGFVSEGKLDEAITWYKEIEKNGCRPLKFVFNSLLPAICKAGDLESAYELCKEIFAKRLLVDEAVLQEVVDALVKGSKQDEAEEIVELAKTNDYLQCKLRLFPKE.

Residues 1–24 constitute a mitochondrion transit peptide; it reads MSSLSRFLLRGNFSFSTHTNRRFF. PPR repeat units lie at residues 105 to 139, 140 to 170, 176 to 210, 211 to 245, 246 to 280, 281 to 315, 316 to 350, and 351 to 385; these read KEGFVARIINLYGRVGMFENAQKVFDEMPERNCKR, TALSFNALLNACVNSKKFDLVEGIFKELPGK, DVASYNTLIKGLCGKGSFTEAVALIDEIENKGLKP, DHITFNILLHESYTKGKFEEGEQIWARMVEKNVKR, DIRSYNARLLGLAMENKSEEMVSLFDKLKGNELKP, DVFTFTAMIKGFVSEGKLDEAITWYKEIEKNGCRP, LKFVFNSLLPAICKAGDLESAYELCKEIFAKRLLV, and DEAVLQEVVDALVKGSKQDEAEEIVELAKTNDYLQ.

The protein belongs to the PPR family. P subfamily. In terms of assembly, component of the mitochondrial ribosome small subunit.

It is found in the mitochondrion. This is Small ribosomal subunit protein mS79 (rPPR3b) from Arabidopsis thaliana (Mouse-ear cress).